Consider the following 84-residue polypeptide: MAHKKAGGSTRNGRDSNPKYLGVKRYGGELVKAGTIIIRQRGTKTHPGVNVGCGKDHTLFALKDGTVKFHTGGALNRKFVSIEE.

Residues 1–21 (MAHKKAGGSTRNGRDSNPKYL) form a disordered region.

It belongs to the bacterial ribosomal protein bL27 family.

The sequence is that of Large ribosomal subunit protein bL27 from Francisella tularensis subsp. holarctica (strain FTNF002-00 / FTA).